Here is a 257-residue protein sequence, read N- to C-terminus: UPF0246 protein Mpe_A2092 (257 aa).

The protein belongs to the UPF0246 family.

The sequence is that of UPF0246 protein Mpe_A2092 from Methylibium petroleiphilum (strain ATCC BAA-1232 / LMG 22953 / PM1).